The primary structure comprises 291 residues: Ribosomal protein L11 methyltransferase (291 aa).

Positions 136, 159, 181, and 228 each coordinate S-adenosyl-L-methionine.

The protein belongs to the methyltransferase superfamily. PrmA family.

The protein localises to the cytoplasm. The enzyme catalyses L-lysyl-[protein] + 3 S-adenosyl-L-methionine = N(6),N(6),N(6)-trimethyl-L-lysyl-[protein] + 3 S-adenosyl-L-homocysteine + 3 H(+). Methylates ribosomal protein L11. This is Ribosomal protein L11 methyltransferase from Sinorhizobium fredii (strain NBRC 101917 / NGR234).